The chain runs to 183 residues: Large ribosomal subunit protein uL6 (183 aa).

Belongs to the universal ribosomal protein uL6 family. Part of the 50S ribosomal subunit.

Functionally, this protein binds to the 23S rRNA, and is important in its secondary structure. It is located near the subunit interface in the base of the L7/L12 stalk, and near the tRNA binding site of the peptidyltransferase center. This Chlamydia pneumoniae (Chlamydophila pneumoniae) protein is Large ribosomal subunit protein uL6.